The primary structure comprises 131 residues: Large ribosomal subunit protein eL32 (131 aa).

It belongs to the eukaryotic ribosomal protein eL32 family. In terms of assembly, component of the large ribosomal subunit. Mature ribosomes consist of a small (40S) and a large (60S) subunit. The 40S subunit contains about 32 different proteins and 1 molecule of RNA (18S). The 60S subunit contains 45 different proteins and 3 molecules of RNA (25S, 5.8S and 5S).

The protein resides in the cytoplasm. Functionally, component of the ribosome, a large ribonucleoprotein complex responsible for the synthesis of proteins in the cell. The small ribosomal subunit (SSU) binds messenger RNAs (mRNAs) and translates the encoded message by selecting cognate aminoacyl-transfer RNA (tRNA) molecules. The large subunit (LSU) contains the ribosomal catalytic site termed the peptidyl transferase center (PTC), which catalyzes the formation of peptide bonds, thereby polymerizing the amino acids delivered by tRNAs into a polypeptide chain. The nascent polypeptides leave the ribosome through a tunnel in the LSU and interact with protein factors that function in enzymatic processing, targeting, and the membrane insertion of nascent chains at the exit of the ribosomal tunnel. This chain is Large ribosomal subunit protein eL32, found in Candida albicans (strain SC5314 / ATCC MYA-2876) (Yeast).